The following is a 173-amino-acid chain: ATP-dependent protease subunit HslV (173 aa).

Threonine 2 is a catalytic residue. Glycine 158, aspartate 161, and serine 164 together coordinate Na(+).

The protein belongs to the peptidase T1B family. HslV subfamily. In terms of assembly, a double ring-shaped homohexamer of HslV is capped on each side by a ring-shaped HslU homohexamer. The assembly of the HslU/HslV complex is dependent on binding of ATP.

It is found in the cytoplasm. The catalysed reaction is ATP-dependent cleavage of peptide bonds with broad specificity.. Its activity is regulated as follows. Allosterically activated by HslU binding. In terms of biological role, protease subunit of a proteasome-like degradation complex believed to be a general protein degrading machinery. This Glaesserella parasuis serovar 5 (strain SH0165) (Haemophilus parasuis) protein is ATP-dependent protease subunit HslV.